A 465-amino-acid chain; its full sequence is Protein hedgehog (465 aa).

A lipid anchor (N-palmitoyl cysteine) is attached at Cys79. Residues Glu143, Glu144, Asp149, Thr179, Glu180, Asp183, and Asp185 each coordinate Ca(2+). The Cholesterol glycine ester moiety is linked to residue Gly251.

This sequence belongs to the hedgehog family. Interacts with shf. The C-terminal part of the hedgehog protein precursor displays an autoproteolysis activity that results in the cleavage of the full-length protein into two parts (N-product and C-product). In addition, the C-terminal part displays a cholesterol transferase activity that results by the covalent attachment of a cholesterol moiety to the C-terminal of the newly generated N-product. The N-product is the active species in both local and long-range signaling, whereas the C-product has no signaling activity. Post-translationally, cholesterylation is required for N-product targeting to lipid rafts and multimerization. In terms of processing, N-palmitoylation by Rasp of the hedgehog N-product, within the secretory pathway, is required for the embryonic and larval patterning activities of the hedgehog signal.

Its subcellular location is the nucleus. The protein resides in the cytoplasm. It localises to the cell membrane. It catalyses the reaction glycyl-L-cysteinyl-[protein] + cholesterol + H(+) = [protein]-C-terminal glycyl cholesterol ester + N-terminal L-cysteinyl-[protein]. In terms of biological role, the C-terminal part of the hedgehog protein precursor displays an autoproteolysis activity that results in the cleavage of the full-length protein into two parts (N-product and C-product). In addition, the C-terminal part displays a cholesterol transferase activity that results by the covalent attachment of a cholesterol moiety to the C-terminal of the newly generated N-product. Once cleaved, the C-product has no signaling activity and diffuses from the cell. The dually lipidated hedgehog protein N-product is a morphogen which is essential for a variety of patterning events during development. Establishes the anterior-posterior axis of the embryonic segments and patterns the larval imaginal disks. Binds to the patched (ptc) receptor, which functions in association with smoothened (smo), to activate the transcription of target genes wingless (wg), decapentaplegic (dpp) and ptc. In the absence of hh, ptc represses the constitutive signaling activity of smo through fused (fu). Essential component of a signaling pathway which regulates the Duox-dependent gut immune response to bacterial uracil; required to activate Cad99C-dependent endosome formation, norpA-dependent Ca2+ mobilization and p38 MAPK, which are essential steps in the Duox-dependent production of reactive oxygen species (ROS) in response to intestinal bacterial infection. During photoreceptor differentiation, it up-regulates transcription of Ubr3, which in turn promotes the hh-signaling pathway by mediating the ubiquitination and degradation of cos. The chain is Protein hedgehog from Drosophila yakuba (Fruit fly).